A 367-amino-acid chain; its full sequence is Homoserine O-acetyltransferase (367 aa).

The region spanning 44-350 (NAILVTHAWT…AYGHDAFLLE (307 aa)) is the AB hydrolase-1 domain. The active-site Nucleophile is the S150. R217 lines the substrate pocket. Residues D311 and H344 contribute to the active site. Residue D345 participates in substrate binding.

This sequence belongs to the AB hydrolase superfamily. MetX family. As to quaternary structure, homodimer.

It localises to the cytoplasm. It carries out the reaction L-homoserine + acetyl-CoA = O-acetyl-L-homoserine + CoA. The protein operates within amino-acid biosynthesis; L-methionine biosynthesis via de novo pathway; O-acetyl-L-homoserine from L-homoserine: step 1/1. Functionally, transfers an acetyl group from acetyl-CoA to L-homoserine, forming acetyl-L-homoserine. This chain is Homoserine O-acetyltransferase, found in Citrifermentans bemidjiense (strain ATCC BAA-1014 / DSM 16622 / JCM 12645 / Bem) (Geobacter bemidjiensis).